The sequence spans 196 residues: Holliday junction branch migration complex subunit RuvA (196 aa).

The tract at residues 1–63 (MLDFIKGEIV…EETHQLFGFI (63 aa)) is domain I. Residues 64–142 (DKKERQLFTH…PDNIPSSDTI (79 aa)) are domain II. Residues 143 to 146 (ITNI) form a flexible linker region. The interval 146–196 (ISSNITKEAITALITLGFSQSASQKVVNKIVSNNSSSTTIEQIIKKALKLL) is domain III.

The protein belongs to the RuvA family. In terms of assembly, homotetramer. Forms an RuvA(8)-RuvB(12)-Holliday junction (HJ) complex. HJ DNA is sandwiched between 2 RuvA tetramers; dsDNA enters through RuvA and exits via RuvB. An RuvB hexamer assembles on each DNA strand where it exits the tetramer. Each RuvB hexamer is contacted by two RuvA subunits (via domain III) on 2 adjacent RuvB subunits; this complex drives branch migration. In the full resolvosome a probable DNA-RuvA(4)-RuvB(12)-RuvC(2) complex forms which resolves the HJ.

Its subcellular location is the cytoplasm. Its function is as follows. The RuvA-RuvB-RuvC complex processes Holliday junction (HJ) DNA during genetic recombination and DNA repair, while the RuvA-RuvB complex plays an important role in the rescue of blocked DNA replication forks via replication fork reversal (RFR). RuvA specifically binds to HJ cruciform DNA, conferring on it an open structure. The RuvB hexamer acts as an ATP-dependent pump, pulling dsDNA into and through the RuvAB complex. HJ branch migration allows RuvC to scan DNA until it finds its consensus sequence, where it cleaves and resolves the cruciform DNA. In Azobacteroides pseudotrichonymphae genomovar. CFP2, this protein is Holliday junction branch migration complex subunit RuvA.